A 469-amino-acid chain; its full sequence is Serine hydroxymethyltransferase, cytosolic (469 aa).

Position 248 is an N6-(pyridoxal phosphate)lysine (Lys248).

This sequence belongs to the SHMT family. As to quaternary structure, homotetramer. Pyridoxal 5'-phosphate serves as cofactor.

Its subcellular location is the cytoplasm. The enzyme catalyses (6R)-5,10-methylene-5,6,7,8-tetrahydrofolate + glycine + H2O = (6S)-5,6,7,8-tetrahydrofolate + L-serine. It functions in the pathway one-carbon metabolism; tetrahydrofolate interconversion. Interconversion of serine and glycine. The polypeptide is Serine hydroxymethyltransferase, cytosolic (SHM2) (Candida glabrata (strain ATCC 2001 / BCRC 20586 / JCM 3761 / NBRC 0622 / NRRL Y-65 / CBS 138) (Yeast)).